The sequence spans 164 residues: NADH-quinone oxidoreductase subunit I (164 aa).

2 4Fe-4S ferredoxin-type domains span residues 55–85 (LRRY…IDAE) and 95–124 (TRYD…EGPN). The [4Fe-4S] cluster site is built by cysteine 65, cysteine 68, cysteine 71, cysteine 75, cysteine 104, cysteine 107, cysteine 110, and cysteine 114.

Belongs to the complex I 23 kDa subunit family. NDH-1 is composed of 14 different subunits. Subunits NuoA, H, J, K, L, M, N constitute the membrane sector of the complex. The cofactor is [4Fe-4S] cluster.

It localises to the cell inner membrane. The enzyme catalyses a quinone + NADH + 5 H(+)(in) = a quinol + NAD(+) + 4 H(+)(out). In terms of biological role, NDH-1 shuttles electrons from NADH, via FMN and iron-sulfur (Fe-S) centers, to quinones in the respiratory chain. The immediate electron acceptor for the enzyme in this species is believed to be ubiquinone. Couples the redox reaction to proton translocation (for every two electrons transferred, four hydrogen ions are translocated across the cytoplasmic membrane), and thus conserves the redox energy in a proton gradient. In Ruegeria pomeroyi (strain ATCC 700808 / DSM 15171 / DSS-3) (Silicibacter pomeroyi), this protein is NADH-quinone oxidoreductase subunit I.